Reading from the N-terminus, the 108-residue chain is UPF0102 protein Sfri_0388 (108 aa).

This sequence belongs to the UPF0102 family.

The chain is UPF0102 protein Sfri_0388 from Shewanella frigidimarina (strain NCIMB 400).